The following is a 181-amino-acid chain: ATP synthase subunit b (181 aa).

The chain crosses the membrane as a helical span at residues 24 to 44; sequence LFPNLPNFIAHLLATIVLVIV.

The protein belongs to the ATPase B chain family. In terms of assembly, F-type ATPases have 2 components, F(1) - the catalytic core - and F(0) - the membrane proton channel. F(1) has five subunits: alpha(3), beta(3), gamma(1), delta(1), epsilon(1). F(0) has three main subunits: a(1), b(2) and c(10-14). The alpha and beta chains form an alternating ring which encloses part of the gamma chain. F(1) is attached to F(0) by a central stalk formed by the gamma and epsilon chains, while a peripheral stalk is formed by the delta and b chains.

The protein localises to the cell membrane. Functionally, f(1)F(0) ATP synthase produces ATP from ADP in the presence of a proton or sodium gradient. F-type ATPases consist of two structural domains, F(1) containing the extramembraneous catalytic core and F(0) containing the membrane proton channel, linked together by a central stalk and a peripheral stalk. During catalysis, ATP synthesis in the catalytic domain of F(1) is coupled via a rotary mechanism of the central stalk subunits to proton translocation. Its function is as follows. Component of the F(0) channel, it forms part of the peripheral stalk, linking F(1) to F(0). In Mycoplasma capricolum subsp. capricolum (strain California kid / ATCC 27343 / NCTC 10154), this protein is ATP synthase subunit b.